The following is a 2118-amino-acid chain: Separin (2118 aa).

Phosphoserine is present on Ser1121. Residues 1309-1318 are compositionally biased toward basic residues; that stretch reads KCSGRGRRRI. The segment at 1309 to 1352 is disordered; it reads KCSGRGRRRIASVPPPLHNSSQKGLEEEGPPCTPKPPGRARQAG. Phosphoserine occurs at positions 1391 and 1394. Residues 1408-1428 form a disordered region; it reads EEPKRRGTASRTRGQTRKGRS. Residue Ser1504 is modified to Phosphoserine. In terms of domain architecture, Peptidase C50 spans 1941–2036; the sequence is PQNTFYVLNP…SAALAVHGNL (96 aa). The active site involves Cys2025.

Interacts with PTTG1. Interacts with RAD21. In terms of processing, autocleaves. This function, which is not essential for its protease activity, is unknown. Post-translationally, phosphorylated by CDK1. There is 8 Ser/Thr phosphorylation sites. Among them, only Ser-1121 phosphorylation is the major site, which conducts to the enzyme inactivation.

The protein resides in the cytoplasm. Its subcellular location is the nucleus. It catalyses the reaction All bonds known to be hydrolyzed by this endopeptidase have arginine in P1 and an acidic residue in P4. P6 is often occupied by an acidic residue or by a hydroxy-amino-acid residue, the phosphorylation of which enhances cleavage.. With respect to regulation, regulated by at least two independent mechanisms. First, it is inactivated via its interaction with securin/PTTG1, which probably covers its active site. The association with PTTG1 is not only inhibitory, since PTTG1 is also required for activating it, the enzyme being inactive in cells in which PTTG1 is absent. PTTG1 degradation at anaphase, liberates it and triggers RAD21 cleavage. Second, phosphorylation at Ser-1121 inactivates it. The complete phosphorylation during mitosis, is removed when cells undergo anaphase. Activation of the enzyme at the metaphase-anaphase transition probably requires the removal of both securin and inhibitory phosphate. In terms of biological role, caspase-like protease, which plays a central role in the chromosome segregation by cleaving the SCC1/RAD21 subunit of the cohesin complex at the onset of anaphase. During most of the cell cycle, it is inactivated by different mechanisms. This Mus musculus (Mouse) protein is Separin (Espl1).